The sequence spans 166 residues: Ureidoglycolate lyase (166 aa).

The protein belongs to the ureidoglycolate lyase family. Homodimer. It depends on Ni(2+) as a cofactor.

The enzyme catalyses (S)-ureidoglycolate = urea + glyoxylate. The protein operates within nitrogen metabolism; (S)-allantoin degradation. Functionally, catalyzes the catabolism of the allantoin degradation intermediate (S)-ureidoglycolate, generating urea and glyoxylate. Involved in the utilization of allantoin as nitrogen source. This is Ureidoglycolate lyase from Rhizobium etli (strain ATCC 51251 / DSM 11541 / JCM 21823 / NBRC 15573 / CFN 42).